We begin with the raw amino-acid sequence, 387 residues long: Eukaryotic translation initiation factor 3 subunit M (387 aa).

Residues 181 to 340 enclose the PCI domain; that stretch reads LSSKVMIELL…QKVHISSTMH (160 aa).

The protein belongs to the eIF-3 subunit M family. In terms of assembly, component of the eukaryotic translation initiation factor 3 (eIF-3) complex. The eIF-3 complex interacts with pix.

The protein localises to the cytoplasm. It is found in the golgi apparatus. Functionally, component of the eukaryotic translation initiation factor 3 (eIF-3) complex, which is involved in protein synthesis of a specialized repertoire of mRNAs and, together with other initiation factors, stimulates binding of mRNA and methionyl-tRNAi to the 40S ribosome. The eIF-3 complex specifically targets and initiates translation of a subset of mRNAs involved in cell proliferation. The protein is Eukaryotic translation initiation factor 3 subunit M of Drosophila sechellia (Fruit fly).